A 181-amino-acid polypeptide reads, in one-letter code: MTTASPSQVRQNYHQDSEAAINRQINLELYASYVYLSMSYYFDRDDVALKNFAKYFLHQSHEEREHAERLMKLQNQRGGRIFLQDIKKPDRDDWENGLTAMECALCLERSVNQSLLELHKLATEKNDPHLCDFIETHYLNEQVEAIKELGDHITNLRKMGAPGSGMAEYLFDKHTLGHSES.

Met1 bears the N-acetylmethionine mark. Thr2 carries the N-acetylthreonine; in Ferritin heavy chain, N-terminally processed modification. Positions 11–160 (QNYHQDSEAA…DHITNLRKMG (150 aa)) constitute a Ferritin-like diiron domain. Positions 28, 63, 66, 108, and 142 each coordinate Fe cation. Ser179 bears the Phosphoserine mark.

This sequence belongs to the ferritin family. Oligomer of 24 subunits. There are two types of subunits: L (light) chain and H (heavy) chain. The major chain can be light or heavy, depending on the species and tissue type. The functional molecule forms a roughly spherical shell with a diameter of 12 nm and contains a central cavity into which the insoluble mineral iron core is deposited. Interacts with NCOA4; NCOA4 promotes targeting of the iron-binding ferritin complex to autolysosomes following starvation or iron depletion.

The protein localises to the cytoplasm. The protein resides in the lysosome. It localises to the cytoplasmic vesicle. Its subcellular location is the autophagosome. It catalyses the reaction 4 Fe(2+) + O2 + 4 H(+) = 4 Fe(3+) + 2 H2O. Stores iron in a soluble, non-toxic, readily available form. Important for iron homeostasis. Has ferroxidase activity. Iron is taken up in the ferrous form and deposited as ferric hydroxides after oxidation. Also plays a role in delivery of iron to cells. Mediates iron uptake in capsule cells of the developing kidney. Delivery to lysosomes is mediated by the cargo receptor NCOA4 for autophagic degradation and release of iron. This Bos taurus (Bovine) protein is Ferritin heavy chain (FTH1).